The chain runs to 184 residues: uncharacterized protein (184 aa).

This is an uncharacterized protein from Clostridium acetobutylicum (strain ATCC 824 / DSM 792 / JCM 1419 / IAM 19013 / LMG 5710 / NBRC 13948 / NRRL B-527 / VKM B-1787 / 2291 / W).